The primary structure comprises 107 residues: U1-lycotoxin-Ls1b (107 aa).

A signal peptide spans 1–20; the sequence is MMKVLVVVALLVTHISYSSS. The propeptide occupies 21-41; sequence EGIDDLEADELLSLMANEQTR. 4 disulfide bridges follow: Cys44/Cys59, Cys51/Cys68, Cys58/Cys86, and Cys70/Cys84.

Belongs to the neurotoxin 19 (CSTX) family. 04 (U1-Lctx) subfamily. In terms of tissue distribution, expressed by the venom gland.

The protein resides in the secreted. This is U1-lycotoxin-Ls1b from Lycosa singoriensis (Wolf spider).